The primary structure comprises 199 residues: Recombination protein RecR (199 aa).

The segment at 57–72 (CQSCRTYTEESLCPIC) adopts a C4-type zinc-finger fold. Residues 81 to 176 (STICVVETPA…VISRIAHGVP (96 aa)) form the Toprim domain.

It belongs to the RecR family.

Functionally, may play a role in DNA repair. It seems to be involved in an RecBC-independent recombinational process of DNA repair. It may act with RecF and RecO. The polypeptide is Recombination protein RecR (Shewanella sp. (strain ANA-3)).